The sequence spans 159 residues: Ribosomal RNA large subunit methyltransferase H (159 aa).

Residues leucine 76, glycine 107, and leucine 126–methionine 131 contribute to the S-adenosyl-L-methionine site.

The protein belongs to the RNA methyltransferase RlmH family. Homodimer.

It is found in the cytoplasm. It catalyses the reaction pseudouridine(1915) in 23S rRNA + S-adenosyl-L-methionine = N(3)-methylpseudouridine(1915) in 23S rRNA + S-adenosyl-L-homocysteine + H(+). Its function is as follows. Specifically methylates the pseudouridine at position 1915 (m3Psi1915) in 23S rRNA. The protein is Ribosomal RNA large subunit methyltransferase H of Acinetobacter baumannii (strain SDF).